A 336-amino-acid polypeptide reads, in one-letter code: Foldase protein PrsA (336 aa).

Positions 1 to 22 (MKSAKKLLSVLCLGIFILTFTA) are cleaved as a signal peptide. A lipid anchor (N-palmitoyl cysteine) is attached at C23. A lipid anchor (S-diacylglycerol cysteine) is attached at C23. A PpiC domain is found at 194-286 (PNTMNVSHIL…WGYHIIKVNS (93 aa)).

The protein belongs to the PrsA family.

It localises to the cell membrane. It carries out the reaction [protein]-peptidylproline (omega=180) = [protein]-peptidylproline (omega=0). Its function is as follows. Plays a major role in protein secretion by helping the post-translocational extracellular folding of several secreted proteins. The chain is Foldase protein PrsA from Clostridium botulinum (strain ATCC 19397 / Type A).